Reading from the N-terminus, the 174-residue chain is Large ribosomal subunit protein uL18 (174 aa).

This sequence belongs to the universal ribosomal protein uL18 family. As to quaternary structure, part of the 50S ribosomal subunit. Contacts the 5S and 23S rRNAs.

Functionally, this is one of the proteins that bind and probably mediate the attachment of the 5S RNA into the large ribosomal subunit, where it forms part of the central protuberance. The protein is Large ribosomal subunit protein uL18 of Methanoregula boonei (strain DSM 21154 / JCM 14090 / 6A8).